Reading from the N-terminus, the 101-residue chain is NADH-quinone oxidoreductase subunit K (101 aa).

A run of 3 helical transmembrane segments spans residues Val-4–Leu-24, Ile-29–Ala-49, and Val-61–Val-81.

This sequence belongs to the complex I subunit 4L family. In terms of assembly, NDH-1 is composed of 14 different subunits. Subunits NuoA, H, J, K, L, M, N constitute the membrane sector of the complex.

The protein resides in the cell inner membrane. It catalyses the reaction a quinone + NADH + 5 H(+)(in) = a quinol + NAD(+) + 4 H(+)(out). NDH-1 shuttles electrons from NADH, via FMN and iron-sulfur (Fe-S) centers, to quinones in the respiratory chain. The immediate electron acceptor for the enzyme in this species is believed to be ubiquinone. Couples the redox reaction to proton translocation (for every two electrons transferred, four hydrogen ions are translocated across the cytoplasmic membrane), and thus conserves the redox energy in a proton gradient. The polypeptide is NADH-quinone oxidoreductase subunit K (Legionella pneumophila (strain Paris)).